The primary structure comprises 294 residues: Lipoyl synthase (294 aa).

7 residues coordinate [4Fe-4S] cluster: cysteine 35, cysteine 40, cysteine 46, cysteine 61, cysteine 65, cysteine 68, and serine 273. A Radical SAM core domain is found at 47–262 (FRQRQATFLI…REQALSMGFE (216 aa)).

It belongs to the radical SAM superfamily. Lipoyl synthase family. Requires [4Fe-4S] cluster as cofactor.

Its subcellular location is the cytoplasm. It catalyses the reaction [[Fe-S] cluster scaffold protein carrying a second [4Fe-4S](2+) cluster] + N(6)-octanoyl-L-lysyl-[protein] + 2 oxidized [2Fe-2S]-[ferredoxin] + 2 S-adenosyl-L-methionine + 4 H(+) = [[Fe-S] cluster scaffold protein] + N(6)-[(R)-dihydrolipoyl]-L-lysyl-[protein] + 4 Fe(3+) + 2 hydrogen sulfide + 2 5'-deoxyadenosine + 2 L-methionine + 2 reduced [2Fe-2S]-[ferredoxin]. It functions in the pathway protein modification; protein lipoylation via endogenous pathway; protein N(6)-(lipoyl)lysine from octanoyl-[acyl-carrier-protein]: step 2/2. Functionally, catalyzes the radical-mediated insertion of two sulfur atoms into the C-6 and C-8 positions of the octanoyl moiety bound to the lipoyl domains of lipoate-dependent enzymes, thereby converting the octanoylated domains into lipoylated derivatives. In Geotalea daltonii (strain DSM 22248 / JCM 15807 / FRC-32) (Geobacter daltonii), this protein is Lipoyl synthase.